The chain runs to 285 residues: Gas vesicle protein C2 (285 aa).

6 repeat units span residues 22 to 52, 53 to 84, 85 to 122, 123 to 155, 156 to 188, and 189 to 220. The segment at 22 to 220 is 6 X approximate tandem repeats; it reads EAMDAYAEEF…ADDTTAQTDV (199 aa).

This sequence belongs to the halobacterial gas vesicle GvpC family.

It is found in the gas vesicle. Functionally, confers stability, involved in shaping gas vesicles (GV), hollow, gas filled proteinaceous nanostructures. GVs allow positioning of halobacteria at an optimal depth for growth in the poorly aerated, shallow brine pools of their habitat. Its function is as follows. Expression of 2 c-vac DNA fragments containing 2 divergently transcribed regions (gvpE-gvpF-gvpG-gvpH-gvpI-gvpJ-gvpK-gvpL-gvpM and gvpA-gvpC-gvpN-gvpO) allows H.volcanii to produce gas vesicles. This chain is Gas vesicle protein C2, found in Halobacterium salinarum (strain ATCC 700922 / JCM 11081 / NRC-1) (Halobacterium halobium).